The primary structure comprises 475 residues: Glutamate--tRNA ligase (475 aa).

The short motif at 8–18 (PSPTGTLHIGT) is the 'HIGH' region element. The short motif at 247-251 (KLSKR) is the 'KMSKS' region element. Position 250 (Lys-250) interacts with ATP.

This sequence belongs to the class-I aminoacyl-tRNA synthetase family. Glutamate--tRNA ligase type 1 subfamily. Monomer.

Its subcellular location is the cytoplasm. It carries out the reaction tRNA(Glu) + L-glutamate + ATP = L-glutamyl-tRNA(Glu) + AMP + diphosphate. Functionally, catalyzes the attachment of glutamate to tRNA(Glu) in a two-step reaction: glutamate is first activated by ATP to form Glu-AMP and then transferred to the acceptor end of tRNA(Glu). This Synechococcus sp. (strain RCC307) protein is Glutamate--tRNA ligase.